The chain runs to 971 residues: MSNVSEERRKRQQNIKEGLQFIQSPLSYPGTQEQYAVYLRALVRNLFNEGNDVYREHDWNNSISQYTEALNIADYAKSEEILIPKEIIEKLYINRIACYSNMGFHDKVLEDCNIVLSLNASNCKALYRKSKALSDLGRYKKAYDAVAKCSLAVPQDEHVIKLTQELAQKLGFKIRKAYVRAELSLKSVPGDGATKALNHSVEDIEPDLLTPRQEAVPVVSLPAPSFSHEVGSELASVPVMPLTSILPLQVEESALPSAVLANGGKMPFTMPEAFLDDGDMVLGDELDDLLDSAPETNETVMPSALVRGPLQTASVSPSMPFSASLLGTLPIGARYAPPPSFSEFYPPLTSSLEDFCSSLNSFSMSESKRDLSTSTSREGTPLNNSNSSLLLMNGPGSLFASENFLGISSQPRNDFGNFFGSAVTKPSSSVTPRHPLEGTHELRQACQICFVKSGPKLMDFTYHANIDHKCKKDILIGRIKNVEDKSWKKIRPRPTKTNYEGPYYICKDVAAEEECRYSGHCTFAYCQEEIDVWTLERKGAFSREAFFGGNGKINLTVFKLLQEHLGEFIFLCEKCFDHKPRMISKRNKDNSTACSHPVTKHEFEDNKCLVHILRETTVKYSKIRSFHGQCQLDLCRHEVRYGCLREDECFYAHSLVELKVWIMQNETGISHDAIAQESKRYWQNLEANVPGAQVLGNQIMPGFLNMKIKFVCAQCLRNGQVIEPDKNRKYCSAKARHSWTKDRRAMRVMSIERKKWMNIRPLPTKKQMPLQFDLCNHIASGKKCQYVGNCSFAHSPEEREVWTYMKENGIQDMEQFYELWLKSQKNEKSEDIASQSNKENGKQIHMPTDYAEVTVDFHCWMCGKNCNSEKQWQGHISSEKHKEKVFHTEDDQYCWQHRFPTGYFSICDRYMNGTCPEGNSCKFAHGNAELHEWEERRDALKMKLNKARKDHLIGPNDNDFGKYSFLFKDLN.

TPR repeat units lie at residues 43 to 76 (VRNL…ADYA), 89 to 122 (EKLY…NASN), and 124 to 156 (KALY…VPQD). T210 bears the Phosphothreonine mark. C3H1-type zinc fingers lie at residues 634 to 656 (LCRH…HSLV) and 769 to 797 (PLQF…HSPE). Residues 857-881 (FHCWMCGKNCNSEKQWQGHISSEKH) form a C2H2-type zinc finger. The segment at 906–928 (ICDRYMNGTCPEGNSCKFAHGNA) adopts a C3H1-type 3 zinc-finger fold. The stretch at 924 to 952 (AHGNAELHEWEERRDALKMKLNKARKDHL) forms a coiled coil.

It is found in the nucleus. In terms of biological role, may be a specific regulator of miRNA biogenesis. Binds to microRNAs MIR7-1, MIR16-2 and MIR29A hairpins recognizing the 3'-ATA(A/T)-5' motif in the apical loop. The sequence is that of Zinc finger CCCH domain-containing protein 7A (ZC3H7A) from Homo sapiens (Human).